Consider the following 977-residue polypeptide: Aspartate, glycine, lysine and serine-rich protein (977 aa).

Residues 23 to 116 (GVLPDVDSGF…PITNLGSSTS (94 aa)) form a disordered region. The segment covering 37 to 50 (EETKSEPKQPDTKP) has biased composition (basic and acidic residues). Polar residues predominate over residues 51-63 (EQPSVSKPDSSVN). Residue asparagine 136 is glycosylated (N-linked (GlcNAc...) asparagine). Disordered stretches follow at residues 246–767 (AGGG…TSRG) and 780–922 (GGGK…GSGL). Residues 251 to 278 (YYSDSSDSSDSDSSGSDSSESGSSESGS) show a composition bias toward low complexity. Positions 309–325 (NGSPDNGTPGSGSSRYT) are enriched in polar residues. The segment covering 410-427 (LEDELLGSDSSDEDDIDD) has biased composition (acidic residues). Gly residues predominate over residues 428–443 (GLGGLGLGAGPGGPGG). Basic residues-rich tracts occupy residues 447–457 (TPKHKPRTDKK) and 465–540 (KRKP…VQRK). The span at 541-557 (QPREYKQESPEVEREHS) shows a compositional bias: basic and acidic residues. Over residues 572-583 (KILITSLTSSRG) the composition is skewed to low complexity. Residues 591–643 (DGSGSGNGGGDDGNGGGAGNGGGAGNGGGAGNGGGAGNGGGNGGGGNGGGGND) show a composition bias toward gly residues. A compositionally biased stretch (basic and acidic residues) spans 660 to 675 (EHRNRCEDDDDYREKC). Low complexity predominate over residues 700–724 (SGSSSSSSATESESSSTSTTPSTSS). 3 stretches are compositionally biased toward polar residues: residues 730–744 (ILSTLSGRSQKTRSG), 758–767 (SRPSVATSRG), and 785–801 (STGTTVTSKPSTGTSSA). 3 stretches are compositionally biased toward low complexity: residues 803 to 814 (GLDLSGLLGQLG), 822 to 857 (GPKPDSKPSTGSPSTTSKPSTGSSSGPGLDLSGLLG), and 870 to 907 (KKPTASSKPTAPSTPSKSTGSSPGKGLDLSGLLGKLSP).

Component of the acid-insoluble and acid-soluble organic matrix of calcified layers of the shell (at protein level).

Its subcellular location is the secreted. The protein is Aspartate, glycine, lysine and serine-rich protein of Lottia gigantea (Giant owl limpet).